The sequence spans 311 residues: tRNA pseudouridine synthase B (311 aa).

A substrate-binding site is contributed by H43. D48 acts as the Nucleophile in catalysis. Substrate is bound by residues Y76, Y179, and L200.

The protein belongs to the pseudouridine synthase TruB family. Type 1 subfamily.

The enzyme catalyses uridine(55) in tRNA = pseudouridine(55) in tRNA. Responsible for synthesis of pseudouridine from uracil-55 in the psi GC loop of transfer RNAs. This Sodalis glossinidius (strain morsitans) protein is tRNA pseudouridine synthase B.